The chain runs to 200 residues: Pyrrolidone-carboxylate peptidase (200 aa).

Residues glutamate 78, cysteine 141, and histidine 165 contribute to the active site.

The protein belongs to the peptidase C15 family. Homotetramer.

The protein resides in the cytoplasm. It catalyses the reaction Release of an N-terminal pyroglutamyl group from a polypeptide, the second amino acid generally not being Pro.. Removes 5-oxoproline from various penultimate amino acid residues except L-proline. This is Pyrrolidone-carboxylate peptidase from Lactobacillus helveticus (strain DPC 4571).